The chain runs to 484 residues: Cobyric acid synthase (484 aa).

Positions 251 to 438 (ALKIAVPVLP…LHGLFGSDAY (188 aa)) constitute a GATase cobBQ-type domain. Cys333 functions as the Nucleophile in the catalytic mechanism. His430 is a catalytic residue.

Belongs to the CobB/CobQ family. CobQ subfamily.

It participates in cofactor biosynthesis; adenosylcobalamin biosynthesis. Its function is as follows. Catalyzes amidations at positions B, D, E, and G on adenosylcobyrinic A,C-diamide. NH(2) groups are provided by glutamine, and one molecule of ATP is hydrogenolyzed for each amidation. The protein is Cobyric acid synthase of Rhizobium leguminosarum bv. trifolii (strain WSM2304).